Reading from the N-terminus, the 82-residue chain is RNA-binding protein Hfq (82 aa).

In terms of domain architecture, Sm spans 11–71; the sequence is DTFLNHVRKT…ISTIMPGAPI (61 aa).

The protein belongs to the Hfq family. Homohexamer.

In terms of biological role, RNA chaperone that binds small regulatory RNA (sRNAs) and mRNAs to facilitate mRNA translational regulation in response to envelope stress, environmental stress and changes in metabolite concentrations. Also binds with high specificity to tRNAs. This chain is RNA-binding protein Hfq, found in Nitrobacter winogradskyi (strain ATCC 25391 / DSM 10237 / CIP 104748 / NCIMB 11846 / Nb-255).